Here is a 611-residue protein sequence, read N- to C-terminus: Protein PES4 (611 aa).

A disordered region spans residues 37 to 81 (FNPVVTPIRPDDYHEKTSRSSSSSHSDSPEFLRINNNKSGHKNGK). The span at 45-54 (RPDDYHEKTS) shows a compositional bias: basic and acidic residues. 4 RRM domains span residues 91 to 169 (VPLF…PSLR), 179 to 247 (TNVF…GKKI), 303 to 379 (NSIF…RAQD), and 393 to 471 (STLF…WERQ).

The protein resides in the nucleus. The protein is Protein PES4 (PES4) of Saccharomyces cerevisiae (strain ATCC 204508 / S288c) (Baker's yeast).